A 531-amino-acid chain; its full sequence is SWI/SNF-related matrix-associated actin-dependent regulator of chromatin subfamily D member 2 (531 aa).

Residues 20–85 are disordered; that stretch reads AVAAALGAPP…MSPGSRMPMA (66 aa). Low complexity predominate over residues 34-45; that stretch reads PGMLPNPALRGP. Asymmetric dimethylarginine is present on residues arginine 81 and arginine 104. Residues 202 to 226 form a disordered region; it reads FSPSKADGDNSGTAGTPGGTPAADK. Serine 203 bears the Phosphoserine mark. Phosphothreonine is present on threonine 217. Residue lysine 226 forms a Glycyl lysine isopeptide (Lys-Gly) (interchain with G-Cter in SUMO2) linkage. Positions 306 to 383 constitute an SWIB/MDM2 domain; it reads HQPPQYKLDP…PMKLAGLLQH (78 aa).

It belongs to the SMARCD family. As to quaternary structure, component of the multiprotein chromatin-remodeling complexes SWI/SNF: SWI/SNF-A (BAF), SWI/SNF-B (PBAF) and related complexes. The canonical complex contains a catalytic subunit (either SMARCA4/BRG1/BAF190A or SMARCA2/BRM/BAF190B), and at least SMARCE1, ACTL6A/BAF53, SMARCC1/BAF155, SMARCC2/BAF170, and SMARCB1/SNF5/BAF47. Other subunits specific to each of the complexes may also be present permitting several possible combinations developmentally and tissue specific. Component of the BAF complex, which includes at least actin (ACTB), ARID1A/BAF250A, ARID1B/BAF250B, SMARCA2/BRM, SMARCA4/BRG1, ACTL6A/BAF53, ACTL6B/BAF53B, SMARCE1/BAF57, SMARCC1/BAF155, SMARCC2/BAF170, SMARCB1/SNF5/INI1, and one or more SMARCD1/BAF60A, SMARCD2/BAF60B, or SMARCD3/BAF60C. In muscle cells, the BAF complex also contains DPF3. Component of the SWI/SNF-B (PBAF) chromatin remodeling complex, at least composed of SMARCA4/BRG1, SMARCB1/BAF47/SNF5, ACTL6A/BAF53A or ACTL6B/BAF53B, SMARCE1/BAF57, SMARCD1/BAF60A, SMARCD2/BAF60B, perhaps SMARCD3/BAF60C, SMARCC1/BAF155, SMARCC2/BAF170, PBRM1/BAF180, ARID2/BAF200 and actin (ACTB). Interacts with UNKL. Interacts with CEBPE. Post-translationally, ubiquitinated through a signaling process involving RAC1 and the RING finger protein UNKL.

Its subcellular location is the nucleus. Involved in transcriptional activation and repression of select genes by chromatin remodeling (alteration of DNA-nucleosome topology). Component of SWI/SNF chromatin remodeling complexes that carry out key enzymatic activities, changing chromatin structure by altering DNA-histone contacts within a nucleosome in an ATP-dependent manner. Critical regulator of myeloid differentiation, controlling granulocytopoiesis and the expression of genes involved in neutrophil granule formation. This Rattus norvegicus (Rat) protein is SWI/SNF-related matrix-associated actin-dependent regulator of chromatin subfamily D member 2 (Smarcd2).